A 312-amino-acid chain; its full sequence is Ribosomal protein L11 methyltransferase (312 aa).

Threonine 164, glycine 185, aspartate 207, and asparagine 249 together coordinate S-adenosyl-L-methionine.

The protein belongs to the methyltransferase superfamily. PrmA family.

The protein localises to the cytoplasm. It catalyses the reaction L-lysyl-[protein] + 3 S-adenosyl-L-methionine = N(6),N(6),N(6)-trimethyl-L-lysyl-[protein] + 3 S-adenosyl-L-homocysteine + 3 H(+). Methylates ribosomal protein L11. The chain is Ribosomal protein L11 methyltransferase from Clostridium novyi (strain NT).